The following is an 831-amino-acid chain: Serine/threonine-protein kinase ATG1 (831 aa).

One can recognise a Protein kinase domain in the interval 21 to 321 (YSVEKEIGKG…FTDFFNNEVV (301 aa)). Residues 27–35 (IGKGSFAVV) and K50 each bind ATP. D168 functions as the Proton acceptor in the catalytic mechanism. Polar residues-rich tracts occupy residues 360 to 382 (QQES…TGVR) and 405 to 419 (NSQN…ASQK). The interval 360–419 (QQESAHIPPTQTDENTSVQTGVRRTSGKERLATNHPPHQQIHPEDNSQNPEQSYQSASQK) is disordered.

This sequence belongs to the protein kinase superfamily. Ser/Thr protein kinase family. APG1/unc-51/ULK1 subfamily. In terms of assembly, homodimer. Forms a ternary complex with ATG13 and ATG17.

Its subcellular location is the cytoplasm. It is found in the preautophagosomal structure membrane. It catalyses the reaction L-seryl-[protein] + ATP = O-phospho-L-seryl-[protein] + ADP + H(+). It carries out the reaction L-threonyl-[protein] + ATP = O-phospho-L-threonyl-[protein] + ADP + H(+). Its function is as follows. Serine/threonine protein kinase involved in the cytoplasm to vacuole transport (Cvt) and found to be essential in autophagy, where it is required for the formation of autophagosomes. Involved in the clearance of protein aggregates which cannot be efficiently cleared by the proteasome. Required for selective autophagic degradation of the nucleus (nucleophagy) as well as for mitophagy which contributes to regulate mitochondrial quantity and quality by eliminating the mitochondria to a basal level to fulfill cellular energy requirements and preventing excess ROS production. Also involved in endoplasmic reticulum-specific autophagic process, in selective removal of ER-associated degradation (ERAD) substrates. Plays a key role in ATG9 and ATG23 cycling through the pre-autophagosomal structure and is necessary to promote ATG18 binding to ATG9 through phosphorylation of ATG9. Catalyzes phosphorylation of ATG4, decreasing the interaction between ATG4 and ATG8 and impairing deconjugation of PE-conjugated forms of ATG8. The chain is Serine/threonine-protein kinase ATG1 from Kluyveromyces lactis (strain ATCC 8585 / CBS 2359 / DSM 70799 / NBRC 1267 / NRRL Y-1140 / WM37) (Yeast).